The sequence spans 700 residues: Putative cysteine-rich receptor-like protein kinase 30 (700 aa).

A signal peptide spans methionine 1–alanine 24. Gnk2-homologous domains follow at residues glutamine 25 to serine 129 and leucine 135 to phenylalanine 250. Over glutamine 25 to threonine 285 the chain is Extracellular. N-linked (GlcNAc...) asparagine glycans are attached at residues asparagine 63, asparagine 105, asparagine 146, asparagine 150, and asparagine 191. The chain crosses the membrane as a helical span at residues isoleucine 286–valine 306. At serine 307–aspartate 700 the chain is on the cytoplasmic side. A Protein kinase domain is found at phenylalanine 346–isoleucine 626. Residues isoleucine 352–valine 360 and lysine 374 each bind ATP. The active-site Proton acceptor is the aspartate 474. Phosphoserine is present on serine 478. Threonine 514 is subject to Phosphothreonine. Tyrosine 522 carries the phosphotyrosine modification.

The protein belongs to the protein kinase superfamily. Ser/Thr protein kinase family. CRK subfamily.

The protein localises to the membrane. It catalyses the reaction L-seryl-[protein] + ATP = O-phospho-L-seryl-[protein] + ADP + H(+). The enzyme catalyses L-threonyl-[protein] + ATP = O-phospho-L-threonyl-[protein] + ADP + H(+). The chain is Putative cysteine-rich receptor-like protein kinase 30 (CRK30) from Arabidopsis thaliana (Mouse-ear cress).